Reading from the N-terminus, the 308-residue chain is Acetaldehyde dehydrogenase 1 (308 aa).

Position 10–13 (10–13) interacts with NAD(+); the sequence is SGNI. The active-site Acyl-thioester intermediate is the C128. NAD(+) contacts are provided by residues 159–167 and N285; that span reads SAGPGTRAN.

It belongs to the acetaldehyde dehydrogenase family.

It carries out the reaction acetaldehyde + NAD(+) + CoA = acetyl-CoA + NADH + H(+). This is Acetaldehyde dehydrogenase 1 from Salinispora arenicola (strain CNS-205).